We begin with the raw amino-acid sequence, 155 residues long: Eosinophil cationic protein (155 aa).

The N-terminal stretch at 1–25 (MGLKLLESRLCLLLSLGLVLMLASC) is a signal peptide. The active-site Proton acceptor is the histidine 38. 4 cysteine pairs are disulfide-bonded: cysteine 47–cysteine 106, cysteine 61–cysteine 118, cysteine 79–cysteine 133, and cysteine 86–cysteine 94. 62–66 (KDINT) contacts substrate. Asparagine 88 and asparagine 107 each carry an N-linked (GlcNAc...) asparagine glycan. Histidine 150 acts as the Proton donor in catalysis.

This sequence belongs to the pancreatic ribonuclease family.

The protein resides in the cytoplasmic granule. Its function is as follows. Cytotoxin and helminthotoxin with ribonuclease activity. Possesses a wide variety of biological activities. The chain is Eosinophil cationic protein (Rnase3) from Rattus norvegicus (Rat).